The sequence spans 910 residues: Leucine--tRNA ligase (910 aa).

The 'HIGH' region signature appears at 42-52 (PYPSGKLHMGH). The 'KMSKS' region motif lies at 658–662 (TMSKS). Position 661 (lysine 661) interacts with ATP.

It belongs to the class-I aminoacyl-tRNA synthetase family.

The protein localises to the cytoplasm. It carries out the reaction tRNA(Leu) + L-leucine + ATP = L-leucyl-tRNA(Leu) + AMP + diphosphate. The protein is Leucine--tRNA ligase of Acidovorax sp. (strain JS42).